A 139-amino-acid polypeptide reads, in one-letter code: Putative pre-16S rRNA nuclease (139 aa).

This sequence belongs to the YqgF nuclease family.

The protein resides in the cytoplasm. Functionally, could be a nuclease involved in processing of the 5'-end of pre-16S rRNA. The polypeptide is Putative pre-16S rRNA nuclease (Pectobacterium carotovorum subsp. carotovorum (strain PC1)).